The chain runs to 122 residues: Large ribosomal subunit protein uL14 (122 aa).

The protein belongs to the universal ribosomal protein uL14 family. In terms of assembly, part of the 50S ribosomal subunit. Forms a cluster with proteins L3 and L19. In the 70S ribosome, L14 and L19 interact and together make contacts with the 16S rRNA in bridges B5 and B8.

Its function is as follows. Binds to 23S rRNA. Forms part of two intersubunit bridges in the 70S ribosome. This chain is Large ribosomal subunit protein uL14, found in Desulfovibrio desulfuricans (strain ATCC 27774 / DSM 6949 / MB).